A 151-amino-acid polypeptide reads, in one-letter code: D-aminoacyl-tRNA deacylase (151 aa).

The Gly-cisPro motif, important for rejection of L-amino acids signature appears at 137–138 (GP).

It belongs to the DTD family. In terms of assembly, homodimer.

It localises to the cytoplasm. It carries out the reaction glycyl-tRNA(Ala) + H2O = tRNA(Ala) + glycine + H(+). The catalysed reaction is a D-aminoacyl-tRNA + H2O = a tRNA + a D-alpha-amino acid + H(+). Functionally, an aminoacyl-tRNA editing enzyme that deacylates mischarged D-aminoacyl-tRNAs. Also deacylates mischarged glycyl-tRNA(Ala), protecting cells against glycine mischarging by AlaRS. Acts via tRNA-based rather than protein-based catalysis; rejects L-amino acids rather than detecting D-amino acids in the active site. By recycling D-aminoacyl-tRNA to D-amino acids and free tRNA molecules, this enzyme counteracts the toxicity associated with the formation of D-aminoacyl-tRNA entities in vivo and helps enforce protein L-homochirality. The protein is D-aminoacyl-tRNA deacylase of Solibacter usitatus (strain Ellin6076).